The chain runs to 258 residues: Probable glycerol uptake facilitator protein (258 aa).

2 helical membrane-spanning segments follow: residues 11–31 (WWFLAELIGTFILIIFGNGAV) and 50–70 (TVALTWGIGVLFGVLTANAIF). The NPA 1 motif lies at 77–79 (NPA). The next 3 membrane-spanning stretches (helical) occupy residues 95-115 (ALIWPGFVIGILAQFLGAMIA), 152-172 (FLTEFIATLILIGGVVAASHF), and 180-200 (VPPGFMGLWLVAGIIIAFGGA). An NPA 2 motif is present at residues 206-208 (NPA). The chain crosses the membrane as a helical span at residues 233–253 (WIPVIAPLSAGLVLSIIIGFS).

It belongs to the MIP/aquaporin (TC 1.A.8) family.

The protein resides in the cell membrane. It catalyses the reaction glycerol(in) = glycerol(out). Mediates glycerol diffusion across the cytoplasmic membrane via a pore-type mechanism. The sequence is that of Probable glycerol uptake facilitator protein (glpF) from Mycoplasma genitalium (strain ATCC 33530 / DSM 19775 / NCTC 10195 / G37) (Mycoplasmoides genitalium).